A 75-amino-acid polypeptide reads, in one-letter code: Veswaprin-b (75 aa).

An N-terminal signal peptide occupies residues 1–24 (MSSGGLLLLLGLLTLWAELTPISG). The segment at 23–42 (SGQDRPKKPGLRPPRPQKPP) is disordered. Residues 27-72 (RPKKPGLRPPRPQKPPCVRECKNDWRCPGEQKCCRYGCIYECRDPI) form the WAP; atypical domain. 3 disulfides stabilise this stretch: cysteine 43/cysteine 64, cysteine 47/cysteine 59, and cysteine 53/cysteine 68.

This sequence belongs to the venom waprin family. Expressed by the venom gland.

The protein localises to the secreted. Functionally, damages membranes of susceptible bacteria. Has no hemolytic activity. Not toxic to mice. Does not inhibit the proteinases elastase and cathepsin G. This Demansia vestigiata (Lesser black whip snake) protein is Veswaprin-b.